We begin with the raw amino-acid sequence, 247 residues long: MADS-box transcription factor 1 (247 aa).

Residues 1-61 (MGRGRVELKR…GKLYEFCSTS (61 aa)) enclose the MADS-box domain. The K-box domain maps to 91–181 (ELSSQQEYLK…RQRMEGYQIN (91 aa)).

In terms of tissue distribution, expressed abundantly in the seed coat and to lesser extent in young buds, carpels, petals, and stamen.

It localises to the nucleus. Probable transcription factor. This Pisum sativum (Garden pea) protein is MADS-box transcription factor 1.